Reading from the N-terminus, the 476-residue chain is Bifunctional protein HldE (476 aa).

The segment at methionine 1 to threonine 318 is ribokinase. Asparagine 195–glutamate 198 is an ATP binding site. Aspartate 264 is an active-site residue. Residues methionine 344–aspartate 476 are cytidylyltransferase.

The protein in the N-terminal section; belongs to the carbohydrate kinase PfkB family. It in the C-terminal section; belongs to the cytidylyltransferase family. Homodimer.

The enzyme catalyses D-glycero-beta-D-manno-heptose 7-phosphate + ATP = D-glycero-beta-D-manno-heptose 1,7-bisphosphate + ADP + H(+). It catalyses the reaction D-glycero-beta-D-manno-heptose 1-phosphate + ATP + H(+) = ADP-D-glycero-beta-D-manno-heptose + diphosphate. It participates in nucleotide-sugar biosynthesis; ADP-L-glycero-beta-D-manno-heptose biosynthesis; ADP-L-glycero-beta-D-manno-heptose from D-glycero-beta-D-manno-heptose 7-phosphate: step 1/4. It functions in the pathway nucleotide-sugar biosynthesis; ADP-L-glycero-beta-D-manno-heptose biosynthesis; ADP-L-glycero-beta-D-manno-heptose from D-glycero-beta-D-manno-heptose 7-phosphate: step 3/4. Its pathway is bacterial outer membrane biogenesis; LOS core biosynthesis. Catalyzes the phosphorylation of D-glycero-D-manno-heptose 7-phosphate at the C-1 position to selectively form D-glycero-beta-D-manno-heptose-1,7-bisphosphate. Its function is as follows. Catalyzes the ADP transfer from ATP to D-glycero-beta-D-manno-heptose 1-phosphate, yielding ADP-D-glycero-beta-D-manno-heptose. This is Bifunctional protein HldE from Haemophilus influenzae (strain ATCC 51907 / DSM 11121 / KW20 / Rd).